Consider the following 242-residue polypeptide: Protein fmp-52, mitochondrial (242 aa).

A mitochondrion-targeting transit peptide spans 1-87 (MSTSTPTSTA…VISSLGTTRV (87 aa)). Residues 33–58 (SSQVQTISRRAPANPTNSSRLSPTVN) form a disordered region. The segment covering 35–58 (QVQTISRRAPANPTNSSRLSPTVN) has biased composition (polar residues).

It belongs to the FMP52 family.

The protein resides in the mitochondrion outer membrane. This is Protein fmp-52, mitochondrial (fmp-52) from Neurospora crassa (strain ATCC 24698 / 74-OR23-1A / CBS 708.71 / DSM 1257 / FGSC 987).